Consider the following 1076-residue polypeptide: Cytadherence high molecular weight protein 3 (1076 aa).

Residues 264 to 284 (QGYDQGYDQQYDQQGYDQQGY) form a fibronectin-binding region. Over residues 326-335 (QQPVEVAKPA) the composition is skewed to low complexity. The tract at residues 326–351 (QQPVEVAKPAPTKPVGPKPQPGKKAT) is disordered. Residues 336-345 (PTKPVGPKPQ) show a composition bias toward pro residues. Positions 562-616 (EITKLEELVEIKTDNTESLNKLETLIDENKKIIDQFKQLKEEAKKSNSNINLEKV) form a coiled coil. Disordered regions lie at residues 789-808 (SREH…TTRI) and 850-873 (RINP…EQQP). Residues 797 to 806 (PKAQHQQPTT) are compositionally biased toward polar residues. Over residues 862–873 (YEQPDPYQEQQP) the composition is skewed to low complexity.

The protein localises to the cell projection. Its subcellular location is the attachment organelle membrane. Its function is as follows. Binds immobilized fibronectin. In terms of biological role, component of the cytoskeleton-like structure which stabilizes the shape of the wall-less mycoplasma. This cytoskeleton-like network of accessory proteins containing HMW proteins 1 to 5 allows the proper anchoring of cytadhesin proteins in the mycoplasmal membrane at the attachment organelle. Essential for successful surface parasitism. This Mycoplasmoides gallisepticum (strain R(low / passage 15 / clone 2)) (Mycoplasma gallisepticum) protein is Cytadherence high molecular weight protein 3 (hlp3).